The sequence spans 59 residues: Potassium channel toxin alpha-KTx 16.2 (59 aa).

A signal peptide spans 1 to 22 (MKIFSILLVALIICSISICTEA). Disulfide bonds link Cys-30/Cys-51, Cys-36/Cys-56, and Cys-40/Cys-58.

Belongs to the short scorpion toxin superfamily. Potassium channel inhibitor family. Alpha-KTx 16 subfamily. As to expression, expressed by the venom gland.

Its subcellular location is the secreted. Its function is as follows. Alpha-KTx 16.2: inhibits large conductance calcium-activated potassium channels (KCa1.1/Slo-beta4 KCNMA1/KCNMB4). It appears to block channel activity by a simple bimolecular inhibition process. Shows a fast association rate and a slow dissociation rate of binding on rat brain synaptosome. Significantly inhibits voltage-dependent sodium current and voltage-dependent delayed rectifier potassium currents. In terms of biological role, significantly inhibits voltage-dependent sodium current (Nav) and voltage-dependent delayed rectifier potassium current. This is Potassium channel toxin alpha-KTx 16.2 from Olivierus martensii (Manchurian scorpion).